Reading from the N-terminus, the 547-residue chain is MFS-type transporter M6 (547 aa).

A disordered region spans residues 1-45 (MHRRRRDNLMTPAEMVASMKPPQSLSTEDDDGSRRDSESSADVLK). A helical transmembrane segment spans residues 81-101 (VLVVASFAAAISPFSTSTYYP). The N-linked (GlcNAc...) asparagine glycan is linked to Asn-118. Residues 146–166 (PMFLVCFAIYFVANVGLALQN) form a helical membrane-spanning segment. Asn-167 carries an N-linked (GlcNAc...) asparagine glycan. The next 2 helical transmembrane spans lie at 206 to 226 (LIYA…IGGL) and 236 to 256 (VFWF…IFFG). N-linked (GlcNAc...) asparagine glycosylation occurs at Asn-274. The next 5 helical transmembrane spans lie at 317–337 (FILS…TSVL), 347–367 (YDAV…LLAY), 407–427 (LGFV…YGWQ), 432–452 (APLA…TGVM), and 469–489 (AVGA…VAVV). The N-linked (GlcNAc...) asparagine glycan is linked to Asn-493. Residues 496 to 516 (AGIGWTATVTAGLWVLMMPTL) form a helical membrane-spanning segment.

Belongs to the major facilitator superfamily. CAR1 family.

The protein resides in the membrane. In terms of biological role, MFS-type transporter; part of the gene cluster that mediates the biosynthesis of squalestatin S1 (SQS1, also known as zaragozic acid A), a heavily oxidized fungal polyketide that offers potent cholesterol lowering activity by targeting squalene synthase (SS). This chain is MFS-type transporter M6, found in Phoma sp. (strain ATCC 20986 / MF5453).